The chain runs to 326 residues: Metallophosphoesterase domain-containing protein 1 (326 aa).

It belongs to the UPF0046 family.

In terms of biological role, may have metallophosphoesterase activity (in vitro). This Mus musculus (Mouse) protein is Metallophosphoesterase domain-containing protein 1 (Mpped1).